The following is an 86-amino-acid chain: Small ribosomal subunit protein bS16 (86 aa).

This sequence belongs to the bacterial ribosomal protein bS16 family.

This is Small ribosomal subunit protein bS16 from Thermoanaerobacter sp. (strain X514).